Consider the following 208-residue polypeptide: Imidazoleglycerol-phosphate dehydratase (208 aa).

Belongs to the imidazoleglycerol-phosphate dehydratase family.

It localises to the cytoplasm. It catalyses the reaction D-erythro-1-(imidazol-4-yl)glycerol 3-phosphate = 3-(imidazol-4-yl)-2-oxopropyl phosphate + H2O. It participates in amino-acid biosynthesis; L-histidine biosynthesis; L-histidine from 5-phospho-alpha-D-ribose 1-diphosphate: step 6/9. The chain is Imidazoleglycerol-phosphate dehydratase from Arthrobacter sp. (strain FB24).